The primary structure comprises 183 residues: Large ribosomal subunit protein uL5 (183 aa).

This sequence belongs to the universal ribosomal protein uL5 family. Part of the 50S ribosomal subunit; part of the 5S rRNA/L5/L18/L25 subcomplex. Contacts the 5S rRNA and the P site tRNA. Forms a bridge to the 30S subunit in the 70S ribosome.

In terms of biological role, this is one of the proteins that bind and probably mediate the attachment of the 5S RNA into the large ribosomal subunit, where it forms part of the central protuberance. In the 70S ribosome it contacts protein S13 of the 30S subunit (bridge B1b), connecting the 2 subunits; this bridge is implicated in subunit movement. Contacts the P site tRNA; the 5S rRNA and some of its associated proteins might help stabilize positioning of ribosome-bound tRNAs. In Corynebacterium aurimucosum (strain ATCC 700975 / DSM 44827 / CIP 107346 / CN-1) (Corynebacterium nigricans), this protein is Large ribosomal subunit protein uL5.